The sequence spans 669 residues: DNA ligase (669 aa).

Residues 34 to 38 (DAEYD), 83 to 84 (SL), and glutamate 114 each bind NAD(+). The active-site N6-AMP-lysine intermediate is lysine 116. NAD(+) contacts are provided by arginine 137, glutamate 171, lysine 287, and lysine 311. Cysteine 405, cysteine 408, cysteine 423, and cysteine 428 together coordinate Zn(2+). The region spanning 591-669 (NVESYFAGKT…EERFLQELNK (79 aa)) is the BRCT domain.

The protein belongs to the NAD-dependent DNA ligase family. LigA subfamily. Mg(2+) is required as a cofactor. Mn(2+) serves as cofactor.

It catalyses the reaction NAD(+) + (deoxyribonucleotide)n-3'-hydroxyl + 5'-phospho-(deoxyribonucleotide)m = (deoxyribonucleotide)n+m + AMP + beta-nicotinamide D-nucleotide.. Functionally, DNA ligase that catalyzes the formation of phosphodiester linkages between 5'-phosphoryl and 3'-hydroxyl groups in double-stranded DNA using NAD as a coenzyme and as the energy source for the reaction. It is essential for DNA replication and repair of damaged DNA. The sequence is that of DNA ligase from Bacillus cereus (strain ATCC 10987 / NRS 248).